The following is a 431-amino-acid chain: Enolase (431 aa).

A (2R)-2-phosphoglycerate-binding site is contributed by glutamine 167. The Proton donor role is filled by glutamate 209. The Mg(2+) site is built by aspartate 246, glutamate 289, and aspartate 316. Positions 341, 370, 371, and 392 each coordinate (2R)-2-phosphoglycerate. The Proton acceptor role is filled by lysine 341.

Belongs to the enolase family. Component of the RNA degradosome, a multiprotein complex involved in RNA processing and mRNA degradation. It depends on Mg(2+) as a cofactor.

The protein localises to the cytoplasm. It localises to the secreted. Its subcellular location is the cell surface. The catalysed reaction is (2R)-2-phosphoglycerate = phosphoenolpyruvate + H2O. It participates in carbohydrate degradation; glycolysis; pyruvate from D-glyceraldehyde 3-phosphate: step 4/5. Its function is as follows. Catalyzes the reversible conversion of 2-phosphoglycerate (2-PG) into phosphoenolpyruvate (PEP). It is essential for the degradation of carbohydrates via glycolysis. This chain is Enolase, found in Hahella chejuensis (strain KCTC 2396).